The sequence spans 2170 residues: Brefeldin A-inhibited guanine nucleotide-exchange protein 3 (2170 aa).

Residue serine 471 is modified to Phosphoserine. Disordered stretches follow at residues 489-547 (EHTP…MGKV) and 613-634 (AAEK…CSLA). Polar residues predominate over residues 503-524 (ISISVTTDTGQTTLEGELGQTT). One can recognise an SEC7 domain in the interval 579–792 (RTRSYGSRYS…EELYHQVLDR (214 aa)). Over residues 614–623 (AEKDSGRSDV) the composition is skewed to basic and acidic residues. Residues serine 628, serine 632, and serine 1045 each carry the phosphoserine modification. Residues 1488–1508 (PGFGIYAVVHLLLPVMSLWLL) form a helical membrane-spanning segment. The disordered stretch occupies residues 1843-1872 (SSDSSQQCSSEDEDIFEETAQVSPPRGKEK). Phosphoserine is present on serine 1881. The span at 1938–1955 (FQSESSTPSTGGFSGKNT) shows a compositional bias: polar residues. Disordered regions lie at residues 1938-1997 (FQSE…RKKE) and 2024-2058 (KRRQ…PLLQ). Basic and acidic residues predominate over residues 1956–1966 (PSEDDRREHLS). Serine 1975 and serine 1984 each carry phosphoserine. 2 stretches are compositionally biased toward basic and acidic residues: residues 1986–1997 (KTEKKDPGRKKE) and 2036–2045 (KEVKVDKKGE). 5 positions are modified to phosphoserine: serine 2072, serine 2074, serine 2088, serine 2094, and serine 2096. Positions 2078-2097 (ELLRQEKRPRSGSTGSSLSV) are disordered. The segment covering 2088–2097 (SGSTGSSLSV) has biased composition (low complexity).

Interacts with PHB2. Expressed in pancreatic islet (insulin granules of islet alpha and beta cells) and brain (at protein level).

It localises to the cytoplasmic vesicle. Its subcellular location is the secretory vesicle. It is found in the secretory vesicle membrane. In terms of biological role, participates in the regulation of systemic glucose homeostasis, where it negatively regulates insulin granule biogenesis in pancreatic islet beta cells. Also regulates glucagon granule production in pancreatic alpha cells. Inhibits nuclear translocation of the transcriptional coregulator PHB2 and may enhance estrogen receptor alpha (ESR1) transcriptional activity in breast cancer cells. This Mus musculus (Mouse) protein is Brefeldin A-inhibited guanine nucleotide-exchange protein 3.